The chain runs to 25 residues: Zinc metalloproteinase-disintegrin-like daborhagin-M (25 aa).

The Peptidase M12B domain maps to 14–25 (SYVELIITVDHS). Glu17 is a binding site for Ca(2+).

It belongs to the venom metalloproteinase (M12B) family. P-III subfamily. P-IIIa sub-subfamily. In terms of assembly, monomer. It depends on Zn(2+) as a cofactor. Post-translationally, N-glycosylated. In terms of processing, contains 16 disulfide bonds. As to expression, expressed by the venom gland.

Its subcellular location is the secreted. Inhibited by EDTA, EGTA and 1,10-phenanthroline. Addition of Mg(2+) or Ca(2+) increases the casein hydrolysis rate. Its function is as follows. Snake venom zinc metalloprotease that possesses high hemorrhagic activity (minimum hemorrhagic dose, MHD=0.86 ug) when subcutaneously injected into mice. Has potent fibrinogenolytic activity on alpha-chain of fibrinogen (FGA). Hydrolyzes model substrate (beta-chain of insulin) at Ala(14)-Leu(15) and Tyr(16)-Leu(17) followed by His(10)-Leu(11) and Phe(24)-Phe(25). The polypeptide is Zinc metalloproteinase-disintegrin-like daborhagin-M (Daboia siamensis (Eastern Russel's viper)).